An 832-amino-acid polypeptide reads, in one-letter code: Serine/threonine-protein kinase Doa (832 aa).

Disordered stretches follow at residues 1–86 (MVAA…SKYI), 135–158 (LLQH…QQYP), 179–215 (SDPF…KQAP), and 258–419 (SKIG…QLQQ). The segment covering 8–18 (VPTSSSSSAAT) has biased composition (polar residues). Residues 20 to 32 (RQKDVDNKLEKCL) are compositionally biased toward basic and acidic residues. 3 stretches are compositionally biased toward low complexity: residues 40-53 (TSSN…SNNN), 137-158 (QHQQ…QQYP), and 183-203 (MQQQ…KLQQ). Positions 271 to 282 (HSASFSSAQRPT) are enriched in polar residues. Low complexity-rich tracts occupy residues 285–310 (QFHQ…QHQH), 347–365 (QMQP…TQFQ), and 396–419 (SSSS…QLQQ). The 321-residue stretch at 479–799 (YKIMATLGEG…LGEALHHPFF (321 aa)) folds into the Protein kinase domain. ATP contacts are provided by residues 485 to 493 (LGEGTFGRV) and lysine 508. The Proton acceptor role is filled by aspartate 605. Residues 809–832 (GEVSNKQPLSSGSSSRERSHSLSR) are disordered. Positions 823–832 (SRERSHSLSR) are enriched in basic and acidic residues.

This sequence belongs to the protein kinase superfamily. CMGC Ser/Thr protein kinase family. Lammer subfamily. In terms of assembly, interacts (via N-terminus) with x16 (via Arg/Ser-rich region). Interacts with eEF1gamma (via C-terminus); the interaction is probably direct, is transient and leads to phosphorylation of eEF1gamma by Doa. Requires Mg(2+) as cofactor. Post-translationally, autophosphorylated on serine, threonine and tyrosine residues. Ubiquitous expression in embryos. Stage 17 embryos show elevated expression in CNS and brain. Ubiquitous expression in larval imaginal disks. Increased expression posterior to the eye-antennal disk morphogenetic furrow.

The protein resides in the cytoplasm. It is found in the cytosol. Its subcellular location is the nucleus. It carries out the reaction L-seryl-[protein] + ATP = O-phospho-L-seryl-[protein] + ADP + H(+). It catalyses the reaction L-threonyl-[protein] + ATP = O-phospho-L-threonyl-[protein] + ADP + H(+). The enzyme catalyses L-tyrosyl-[protein] + ATP = O-phospho-L-tyrosyl-[protein] + ADP + H(+). Functionally, dual specificity kinase involved in the negative regulation of microtubule-based transport through phsophorylation of the microtuble-binding protein eEF1gamma. May function in the control of alternative splicing by phosphorylating serine/arginine-rich splicing factors, the SR proteins, including x16. Negative regulator of the copia retrotransposon element of the white (w) gene. In the eye, it is required for normal pigmentation, photoreceptor cell development and for organization of interommatidial bristles. Also essential for embryonic segmentation and differentiation of the nervous system. In terms of biological role, may be the specific isoform involved in regulation of microtubule-based transport through phosphorylation of the microtubule binding protein eEF1gamma. In Drosophila melanogaster (Fruit fly), this protein is Serine/threonine-protein kinase Doa.